Consider the following 491-residue polypeptide: Cobyric acid synthase (491 aa).

Positions 258-445 (ALKVAVPVLG…MHGLFGADAF (188 aa)) constitute a GATase cobBQ-type domain. Cys-340 serves as the catalytic Nucleophile. Residue His-437 is part of the active site.

This sequence belongs to the CobB/CobQ family. CobQ subfamily.

It functions in the pathway cofactor biosynthesis; adenosylcobalamin biosynthesis. Its function is as follows. Catalyzes amidations at positions B, D, E, and G on adenosylcobyrinic A,C-diamide. NH(2) groups are provided by glutamine, and one molecule of ATP is hydrogenolyzed for each amidation. The protein is Cobyric acid synthase of Mesorhizobium japonicum (strain LMG 29417 / CECT 9101 / MAFF 303099) (Mesorhizobium loti (strain MAFF 303099)).